We begin with the raw amino-acid sequence, 194 residues long: RFKKIRRLGALPGLTNKRPRSGSDLKNQLRSGKRSQYRIRLEEKQKLRFHYGLTERQLLKYVHIAGKAKGSTGQVLLQLLEMRLDNILFRLGMASTIPGARQLVNHRHILVNGRIVDIPSYRCKPRDIITTKDKQRSKALIQNSIASSPHEELPNHLTIDLFQYKGLVNQIIDSKWIGLKINELLVVEYYSRQT.

The 62-residue stretch at 82-143 (MRLDNILFRL…KQRSKALIQN (62 aa)) folds into the S4 RNA-binding domain.

Belongs to the universal ribosomal protein uS4 family. Part of the 30S ribosomal subunit. Contacts protein S5. The interaction surface between S4 and S5 is involved in control of translational fidelity.

It is found in the plastid. The protein resides in the chloroplast. One of the primary rRNA binding proteins, it binds directly to 16S rRNA where it nucleates assembly of the body of the 30S subunit. Its function is as follows. With S5 and S12 plays an important role in translational accuracy. The protein is Small ribosomal subunit protein uS4c (rps4) of Sisyrinchium striatum (Satin flower).